Consider the following 364-residue polypeptide: Dihydroorotate dehydrogenase (quinone) (364 aa).

FMN-binding positions include 62–66 (AGFDK) and threonine 86. Residue lysine 66 participates in substrate binding. 111 to 115 (NRMGF) is a substrate binding site. Asparagine 142 and asparagine 175 together coordinate FMN. A substrate-binding site is contributed by asparagine 175. Residue serine 178 is the Nucleophile of the active site. Substrate is bound at residue asparagine 180. FMN contacts are provided by lysine 216 and threonine 244. Residue 245 to 246 (NT) coordinates substrate. FMN is bound by residues glycine 267, glycine 296, and 317-318 (YT).

Belongs to the dihydroorotate dehydrogenase family. Type 2 subfamily. Monomer. FMN is required as a cofactor.

Its subcellular location is the cell membrane. The enzyme catalyses (S)-dihydroorotate + a quinone = orotate + a quinol. Its pathway is pyrimidine metabolism; UMP biosynthesis via de novo pathway; orotate from (S)-dihydroorotate (quinone route): step 1/1. Functionally, catalyzes the conversion of dihydroorotate to orotate with quinone as electron acceptor. The protein is Dihydroorotate dehydrogenase (quinone) of Anaeromyxobacter dehalogenans (strain 2CP-1 / ATCC BAA-258).